A 64-amino-acid chain; its full sequence is UPF0434 protein Bcen_1934 (64 aa).

It belongs to the UPF0434 family.

The sequence is that of UPF0434 protein Bcen_1934 from Burkholderia orbicola (strain AU 1054).